The primary structure comprises 542 residues: MFS thioclapurine efflux transporter tcpA (542 aa).

Positions 1–10 are enriched in basic and acidic residues; that stretch reads MATVGTEEKN. Residues 1–24 form a disordered region; it reads MATVGTEEKNPIGSASNTAEPNVT. The segment covering 13–24 has biased composition (polar residues); the sequence is GSASNTAEPNVT. An N-linked (GlcNAc...) asparagine glycan is attached at asparagine 22. 3 helical membrane-spanning segments follow: residues 32–52, 75–97, and 103–123; these read SGFK…LCGL, GWYT…KLYT, and MILL…AAAP. A glycan (N-linked (GlcNAc...) asparagine) is linked at asparagine 124. 6 helical membrane-spanning segments follow: residues 133–153, 161–181, 193–213, 234–254, 265–285, and 307–327; these read AIAG…LVHA, ALLG…PFIG, CFII…FFVF, IPEI…LQWG, IIAL…LQVL, and IFAL…PIYF. A glycan (N-linked (GlcNAc...) asparagine) is linked at asparagine 332. A helical membrane pass occupies residues 339 to 359; that stretch reads GVNVMPLILGFLVMSIISGVI. The N-linked (GlcNAc...) asparagine glycan is linked to asparagine 361. 4 helical membrane-spanning segments follow: residues 370 to 390, 396 to 416, 427 to 447, and 500 to 520; these read MFLC…FDVG, WIGY…QPIV, VPFG…IFVA, and VLGQ…LGSL.

Belongs to the major facilitator superfamily.

The protein localises to the cell membrane. Functionally, MFS efflux transporter probably involved in thioclapurine export. The protein is MFS thioclapurine efflux transporter tcpA of Claviceps purpurea (strain 20.1) (Ergot fungus).